The primary structure comprises 661 residues: Peroxisomal acyl-coenzyme A oxidase 1 (661 aa).

A Phosphoserine modification is found at Ser-26. Lys-65 carries the post-translational modification N6-acetyllysine. Residues Lys-89 and Lys-90 each carry the N6-succinyllysine modification. Thr-139 contributes to the FAD binding site. N6-succinyllysine is present on Lys-159. Residue Gly-178 participates in FAD binding. At Lys-216 the chain carries N6-acetyllysine. Residue Lys-241 is modified to N6-succinyllysine. Lys-255, Lys-267, and Lys-272 each carry N6-acetyllysine. Residue Lys-349 is modified to N6-succinyllysine. The active-site Proton acceptor is Glu-421. An N6-acetyllysine; alternate mark is found at Lys-437 and Lys-446. An N6-succinyllysine; alternate mark is found at Lys-437 and Lys-446. Residue Lys-500 is modified to N6-acetyllysine. Lys-512 carries the N6-acetyllysine; alternate modification. Lys-512 bears the N6-succinyllysine; alternate mark. Lys-542 bears the N6-succinyllysine mark. Lys-637 carries the post-translational modification N6-acetyllysine; alternate. Lys-637 carries the post-translational modification N6-succinyllysine; alternate. Lys-643 carries the post-translational modification N6-succinyllysine. Residue Ser-649 is modified to Phosphoserine. N6-acetyllysine is present on Lys-652. An N6-succinyllysine modification is found at Lys-655. Positions 659-661 (SKL) match the Microbody targeting signal motif.

The protein belongs to the acyl-CoA oxidase family. As to quaternary structure, homodimer. The enzyme contains three components A, B and C, the latter two being produced from the first by a proteolytic cleavage. Interacts with LONP2. FAD serves as cofactor. As to expression, expressed in Schwann cells. Expressed (at protein level) in liver.

Its subcellular location is the peroxisome. It catalyses the reaction a 2,3-saturated acyl-CoA + O2 = a (2E)-enoyl-CoA + H2O2. The enzyme catalyses hexadecanoyl-CoA + O2 = (2E)-hexadecenoyl-CoA + H2O2. The catalysed reaction is dodecanoyl-CoA + O2 = (2E)-dodecenoyl-CoA + H2O2. It carries out the reaction octanoyl-CoA + O2 = (2E)-octenoyl-CoA + H2O2. It catalyses the reaction decanoyl-CoA + O2 = (2E)-decenoyl-CoA + H2O2. The enzyme catalyses tetradecanoyl-CoA + O2 = (2E)-tetradecenoyl-CoA + H2O2. The catalysed reaction is hexadecanedioyl-CoA + O2 = (2E)-hexadecenedioyl-CoA + H2O2. It carries out the reaction tetracosanoyl-CoA + O2 = (2E)-tetracosenoyl-CoA + H2O2. It catalyses the reaction glutaryl-CoA + O2 = (2E)-glutaconyl-CoA + H2O2. The enzyme catalyses hexanoyl-CoA + O2 = (2E)-hexenoyl-CoA + H2O2. The catalysed reaction is octadecanoyl-CoA + O2 = (2E)-octadecenoyl-CoA + H2O2. It carries out the reaction (5Z,8Z,11Z,14Z,17Z)-eicosapentaenoyl-CoA + O2 = (2E,5Z,8Z,11Z,14Z,17Z)-icosahexaenoyl-CoA + H2O2. It catalyses the reaction (6Z,9Z,12Z,15Z,18Z,21Z)-tetracosahexaenoyl-CoA + O2 = (2E,6Z,9Z,12Z,15Z,18Z,21Z)-tetracosaheptaenoyl-CoA + H2O2. It participates in lipid metabolism; peroxisomal fatty acid beta-oxidation. Its function is as follows. Involved in the initial and rate-limiting step of peroxisomal beta-oxidation of straight-chain saturated and unsaturated very-long-chain fatty acids. Catalyzes the desaturation of fatty acyl-CoAs such as palmitoyl-CoA (hexadecanoyl-CoA) to 2-trans-enoyl-CoAs ((2E)-enoyl-CoAs) such as (2E)-hexadecenoyl-CoA, and donates electrons directly to molecular oxygen (O(2)), thereby producing hydrogen peroxide (H(2)O(2)). In terms of biological role, shows highest activity against medium-chain fatty acyl-CoAs. Shows optimum activity with a chain length of 10 carbons (decanoyl-CoA) in vitro. Is active against a much broader range of substrates and shows activity towards long-chain acyl-CoAs. This Rattus norvegicus (Rat) protein is Peroxisomal acyl-coenzyme A oxidase 1.